Here is a 542-residue protein sequence, read N- to C-terminus: Amino-acid acetyltransferase, mitochondrial (542 aa).

The N-terminal 14 residues, 1–14 (MLFRRLLTTKVGYH), are a transit peptide targeting the mitochondrion. In terms of domain architecture, N-acetyltransferase spans 368–534 (AGSAQLPAHK…LREYITYVRD (167 aa)).

Belongs to the acetyltransferase family.

The protein localises to the mitochondrion. It carries out the reaction L-glutamate + acetyl-CoA = N-acetyl-L-glutamate + CoA + H(+). The protein operates within amino-acid biosynthesis; L-arginine biosynthesis; N(2)-acetyl-L-ornithine from L-glutamate: step 1/4. N-acetylglutamate synthase involved in arginine biosynthesis. The protein is Amino-acid acetyltransferase, mitochondrial (ARG2) of Eremothecium gossypii (strain ATCC 10895 / CBS 109.51 / FGSC 9923 / NRRL Y-1056) (Yeast).